A 364-amino-acid polypeptide reads, in one-letter code: Anhydro-N-acetylmuramic acid kinase (364 aa).

11-18 serves as a coordination point for ATP; it reads GSSLDGID.

It belongs to the anhydro-N-acetylmuramic acid kinase family.

The catalysed reaction is 1,6-anhydro-N-acetyl-beta-muramate + ATP + H2O = N-acetyl-D-muramate 6-phosphate + ADP + H(+). It participates in amino-sugar metabolism; 1,6-anhydro-N-acetylmuramate degradation. It functions in the pathway cell wall biogenesis; peptidoglycan recycling. Functionally, catalyzes the specific phosphorylation of 1,6-anhydro-N-acetylmuramic acid (anhMurNAc) with the simultaneous cleavage of the 1,6-anhydro ring, generating MurNAc-6-P. Is required for the utilization of anhMurNAc either imported from the medium or derived from its own cell wall murein, and thus plays a role in cell wall recycling. The protein is Anhydro-N-acetylmuramic acid kinase of Pseudomonas savastanoi pv. phaseolicola (strain 1448A / Race 6) (Pseudomonas syringae pv. phaseolicola (strain 1448A / Race 6)).